A 131-amino-acid polypeptide reads, in one-letter code: MRHYEIVFMVHPDQSEQVPGMIERYKTAITNANGQIHRLEDWGRRQLAYPINKLHKAHYVLMNVEAPQEVIDELETTFRFNDAVLRNMIMRTKHAVTEASPMVKAKDERRRDVAEDLDEEEVDDVAEDSEE.

The segment at 97–131 is disordered; it reads TEASPMVKAKDERRRDVAEDLDEEEVDDVAEDSEE. Residues 104 to 114 show a composition bias toward basic and acidic residues; it reads KAKDERRRDVA. Residues 115 to 131 show a composition bias toward acidic residues; the sequence is EDLDEEEVDDVAEDSEE.

It belongs to the bacterial ribosomal protein bS6 family.

In terms of biological role, binds together with bS18 to 16S ribosomal RNA. The sequence is that of Small ribosomal subunit protein bS6 from Proteus mirabilis (strain HI4320).